A 198-amino-acid chain; its full sequence is Phosphoheptose isomerase (198 aa).

In terms of domain architecture, SIS spans 36–195 (AIEVYQNGNK…EEAIFRNKFV (160 aa)). 51–53 (NGG) provides a ligand contact to substrate. Zn(2+) contacts are provided by His60 and Glu64. Residues Glu64, 93 to 94 (ND), 119 to 121 (STS), Ser124, and Gln171 each bind substrate. Zn(2+) contacts are provided by Gln171 and His179.

Belongs to the SIS family. GmhA subfamily. Zn(2+) serves as cofactor.

It is found in the cytoplasm. The enzyme catalyses 2 D-sedoheptulose 7-phosphate = D-glycero-alpha-D-manno-heptose 7-phosphate + D-glycero-beta-D-manno-heptose 7-phosphate. The protein operates within carbohydrate biosynthesis; D-glycero-D-manno-heptose 7-phosphate biosynthesis; D-glycero-alpha-D-manno-heptose 7-phosphate and D-glycero-beta-D-manno-heptose 7-phosphate from sedoheptulose 7-phosphate: step 1/1. It functions in the pathway cell surface structure biogenesis; S-layer biogenesis. Functionally, catalyzes the isomerization of sedoheptulose 7-phosphate in D-glycero-D-manno-heptose 7-phosphate. This is Phosphoheptose isomerase from Aneurinibacillus thermoaerophilus.